Consider the following 975-residue polypeptide: Glycine dehydrogenase (decarboxylating) (975 aa).

The residue at position 723 (lysine 723) is an N6-(pyridoxal phosphate)lysine.

The protein belongs to the GcvP family. In terms of assembly, the glycine cleavage system is composed of four proteins: P, T, L and H. Pyridoxal 5'-phosphate serves as cofactor.

The catalysed reaction is N(6)-[(R)-lipoyl]-L-lysyl-[glycine-cleavage complex H protein] + glycine + H(+) = N(6)-[(R)-S(8)-aminomethyldihydrolipoyl]-L-lysyl-[glycine-cleavage complex H protein] + CO2. Functionally, the glycine cleavage system catalyzes the degradation of glycine. The P protein binds the alpha-amino group of glycine through its pyridoxal phosphate cofactor; CO(2) is released and the remaining methylamine moiety is then transferred to the lipoamide cofactor of the H protein. This Burkholderia multivorans (strain ATCC 17616 / 249) protein is Glycine dehydrogenase (decarboxylating).